Reading from the N-terminus, the 33-residue chain is Brevinin-2HSb (33 aa).

A disulfide bond links cysteine 27 and cysteine 33.

In terms of tissue distribution, expressed by the skin glands.

Its subcellular location is the secreted. Has antibacterial activity against the Gram-positive bacterium S.aureus ATCC 25923 and the Gram-negative bacterium E.coli ATCC 25726. In Odorrana hosii (Hose's rock frog), this protein is Brevinin-2HSb.